The following is a 944-amino-acid chain: MSGMVDLKEFLAELGKTQKELKNVIEQAKDIGLELKTNSKMTPEQAGKLYKYIVDGIKEQIQANQPAKNPEQDNKDDLNTAVASKSLNKKVSKTPKKEETKSQPKPKKTKEKKKEAPTPIAKKKGGIEIVNTFENQTPPTENTPKVVSHSQIEKAKQKLQEIQKSREALNKLTQSNANNASNANNAKKEISEVKKQEQEIKRHENIKRRTGFRVIKRNDEVENESENSVTESKKPTQSAAAIFEDIKKEWQEKDKQEAKKAKKPSKPKATPTAKNNKSHKIDFSDARDFKGNDIYDDETDEILLFDLHEQDNFNKEEEEKEIRQNINDRVRVQRKNPWMNESGIKRQSKKKRAFRNDNSQKVIQSTTAIPEEVRVYEFAQKANLNLADVIKTLFNLGLMVTKNDFLDKDSIEILAEEFHLEISVQNTLEEFEVEEVLEGVKKERPPVVTIMGHVDHGKTSLLDKIRDKRVAHTEAGGITQHIGAYMVEKNDKWVSFIDTPGHEAFSQMRNRGAQVTDIAVIVIAADDGVKQQTIEALEHAKAANVPVIFAMNKMDKPNVNPDKLKAECAELGYNPVDWGGEHEFIPVSAKTGDGIDNLLETILIQAGIMELKAIEEGSARAVVLEGSVEKGRGAVATVIVQSGTLSVGDSFFAETAFGKVRTMTDDQGKSIQNLKPSMVALITGLSEVPPAGSVLIGVENDSIARLQAQKRATYLRQKALSKSTKVSFDELSEMVANKELKNIPVVIKADTQGSLEAIKNSLLELNNEEVAIQVIHSGVGGITENDLSLVSSSEHAVILGFNIRPTGNVKNKAKEYNVSIKTYTVIYALIEEMRSLLLGLMSPIIEEEHTGQAEVRETFNIPKVGTIAGCVVSDGVIARGIKARLIRDGVVIHTGEILSLKRFKDDVKEVSKGYECGIMLDNYNEIKVGDVFETYKEIHKKRTL.

Disordered regions lie at residues 61–157 and 173–281; these read IQAN…KAKQ and TQSN…SHKI. Positions 132–150 are enriched in polar residues; sequence TFENQTPPTENTPKVVSHS. Positions 175 to 185 are enriched in low complexity; that stretch reads SNANNASNANN. Positions 186-203 are enriched in basic and acidic residues; it reads AKKEISEVKKQEQEIKRH. Over residues 204–215 the composition is skewed to basic residues; that stretch reads ENIKRRTGFRVI. Residues 244–259 show a composition bias toward basic and acidic residues; it reads EDIKKEWQEKDKQEAK. The tr-type G domain occupies 443–612; the sequence is ERPPVVTIMG…LIQAGIMELK (170 aa). The tract at residues 452 to 459 is G1; the sequence is GHVDHGKT. 452 to 459 lines the GTP pocket; that stretch reads GHVDHGKT. The interval 477 to 481 is G2; sequence GITQH. Residues 498–501 are G3; the sequence is DTPG. GTP contacts are provided by residues 498-502 and 552-555; these read DTPGH and NKMD. The tract at residues 552-555 is G4; that stretch reads NKMD. Residues 588 to 590 form a G5 region; it reads SAK.

Belongs to the TRAFAC class translation factor GTPase superfamily. Classic translation factor GTPase family. IF-2 subfamily.

Its subcellular location is the cytoplasm. Functionally, one of the essential components for the initiation of protein synthesis. Protects formylmethionyl-tRNA from spontaneous hydrolysis and promotes its binding to the 30S ribosomal subunits. Also involved in the hydrolysis of GTP during the formation of the 70S ribosomal complex. The polypeptide is Translation initiation factor IF-2 (infB) (Helicobacter pylori (strain ATCC 700392 / 26695) (Campylobacter pylori)).